Here is a 149-residue protein sequence, read N- to C-terminus: MSIHQVMRYLPHRYPFLLVDRVTDFKPGEYLEAIKNVSINEPYFQGHFPIRPVMPGVLIMEALAQATGLLAFKTEEARNENQDKQQLYLFVGIDEARFRRQVEPGDQLHLRVELLRVVRGIWRFKAEARVNGDLVASATLMCAGKEIES.

H47 is an active-site residue.

It belongs to the thioester dehydratase family. FabZ subfamily.

Its subcellular location is the cytoplasm. It catalyses the reaction a (3R)-hydroxyacyl-[ACP] = a (2E)-enoyl-[ACP] + H2O. Involved in unsaturated fatty acids biosynthesis. Catalyzes the dehydration of short chain beta-hydroxyacyl-ACPs and long chain saturated and unsaturated beta-hydroxyacyl-ACPs. The polypeptide is 3-hydroxyacyl-[acyl-carrier-protein] dehydratase FabZ (Thioalkalivibrio sulfidiphilus (strain HL-EbGR7)).